The primary structure comprises 930 residues: Translation initiation factor IF-2 (930 aa).

The span at 50-67 (FKPAAAPKVEAKPAAPKV) shows a compositional bias: low complexity. 2 disordered regions span residues 50 to 217 (FKPA…SSEE) and 260 to 346 (EVVP…HELP). Composition is skewed to basic and acidic residues over residues 68–90 (SAEKKAEKSEPAKPAVAKEEAKP) and 110–125 (FKAEREARAKEQAERR). The span at 129-141 (KGNNRDQQQNGNR) shows a compositional bias: low complexity. Composition is skewed to basic and acidic residues over residues 157–167 (RDNRRFNDQAK) and 262–295 (VPEKKEPAVDTRRKKQARPDKNRDDYDHEEDGPR). Residues 309 to 318 (NQKNSNWNNN) show a composition bias toward low complexity. Basic and acidic residues predominate over residues 337 to 346 (VTERKFHELP). The 168-residue stretch at 432–599 (ERPPVVTIMG…TVLLVAEIQE (168 aa)) folds into the tr-type G domain. The tract at residues 441 to 448 (GHVDHGKT) is G1. 441 to 448 (GHVDHGKT) lines the GTP pocket. The segment at 466–470 (GITQH) is G2. The G3 stretch occupies residues 487–490 (DTPG). Residues 487–491 (DTPGH) and 541–544 (NKID) contribute to the GTP site. The tract at residues 541 to 544 (NKID) is G4. The tract at residues 577–579 (SAK) is G5.

The protein belongs to the TRAFAC class translation factor GTPase superfamily. Classic translation factor GTPase family. IF-2 subfamily.

The protein localises to the cytoplasm. One of the essential components for the initiation of protein synthesis. Protects formylmethionyl-tRNA from spontaneous hydrolysis and promotes its binding to the 30S ribosomal subunits. Also involved in the hydrolysis of GTP during the formation of the 70S ribosomal complex. The chain is Translation initiation factor IF-2 from Streptococcus pneumoniae (strain CGSP14).